The primary structure comprises 322 residues: AA9 family lytic polysaccharide monooxygenase B (322 aa).

Residues 1–17 (MFSKSIIAASLLTAVTA) form the signal peptide. Histidine 18 lines the Cu(2+) pocket. 2 N-linked (GlcNAc...) asparagine glycosylation sites follow: asparagine 53 and asparagine 68. The cysteines at positions 56 and 173 are disulfide-linked. Histidine 87 is a binding site for Cu(2+). Asparagine 121 and asparagine 133 each carry an N-linked (GlcNAc...) asparagine glycan. Residues histidine 159 and glutamine 168 each contribute to the O2 site. Position 170 (tyrosine 170) interacts with Cu(2+). N-linked (GlcNAc...) asparagine glycosylation is present at asparagine 197.

Belongs to the polysaccharide monooxygenase AA9 family. Cu(2+) is required as a cofactor.

It is found in the secreted. The catalysed reaction is [(1-&gt;4)-beta-D-glucosyl]n+m + reduced acceptor + O2 = 4-dehydro-beta-D-glucosyl-[(1-&gt;4)-beta-D-glucosyl]n-1 + [(1-&gt;4)-beta-D-glucosyl]m + acceptor + H2O.. Lytic polysaccharide monooxygenase (LPMO) that depolymerizes crystalline and amorphous polysaccharides via the oxidation of scissile alpha- or beta-(1-4)-glycosidic bonds, yielding C1 and C4 oxidation products. Catalysis by LPMOs requires the reduction of the active-site copper from Cu(II) to Cu(I) by a reducing agent and H(2)O(2) or O(2) as a cosubstrate. The protein is AA9 family lytic polysaccharide monooxygenase B of Botryotinia fuckeliana (strain B05.10) (Noble rot fungus).